A 425-amino-acid polypeptide reads, in one-letter code: Inner membrane protein YqcE (425 aa).

Residues 1–8 (MQHNSYRR) are Cytoplasmic-facing. A helical transmembrane segment spans residues 9–29 (WITLAIISFSGGVSFDLAYLR). Residues 30-48 (YIYQIPMAKFMGFSNTEIG) lie on the Periplasmic side of the membrane. Residues 49–69 (LIMSTFGIAAIILYAPSGVIA) traverse the membrane as a helical segment. The Cytoplasmic portion of the chain corresponds to 70 to 75 (DKFSHR). Helical transmembrane passes span 76 to 96 (KMIT…ATYP) and 97 to 117 (PLWV…LMLW). Residues 118-138 (SVSIKAASLLGDHSEQGKIMG) lie on the Cytoplasmic side of the membrane. Residues 139–159 (WMEGLRGVGVMSLAVFTMWVF) form a helical membrane-spanning segment. The Periplasmic portion of the chain corresponds to 160–171 (SRFAPDDSTSLK). A helical membrane pass occupies residues 172–192 (TVIIIYSVVYILLGILCWFFV). The Cytoplasmic segment spans residues 193–219 (SDNNNLRSANNEEKQSFQLSDILAVLR). The helical transmembrane segment at 220–240 (ISTTWYCSMVIFGVFTIYAIL) threads the bilayer. Over 241-259 (SYSTNYLTEMYGMSLVAAS) the chain is Periplasmic. The helical transmembrane segment at 260 to 280 (YMGIVINKIFRALCGPLGGII) threads the bilayer. Residues 281-291 (TTYSKVKSPTR) are Cytoplasmic-facing. The chain crosses the membrane as a helical span at residues 292-312 (VIQILSVLGLLTLTALLVTNS). Residue asparagine 313 is a topological domain, periplasmic. The chain crosses the membrane as a helical span at residues 314–334 (PQSVAMGIGLILLLGFTCYAS). Topologically, residues 335 to 354 (RGLYWACPGEARTPSYIMGT) are cytoplasmic. The helical transmembrane segment at 355–375 (TVGICSVIGFLPDVFVYPIIG) threads the bilayer. At 376-388 (HWQDTLPAAEAYR) the chain is on the periplasmic side. A helical membrane pass occupies residues 389 to 409 (NMWLMGMAALGMVIVFTFLLF). Residues 410 to 425 (QKIRTADSAPAMASSK) lie on the Cytoplasmic side of the membrane.

It to E.coli YihN.

It is found in the cell inner membrane. The chain is Inner membrane protein YqcE (yqcE) from Escherichia coli (strain K12).